A 137-amino-acid polypeptide reads, in one-letter code: Ribonuclease VapC51 (137 aa).

Residues 5 to 120 enclose the PINc domain; it reads YLLDTSVIKR…HYDADFDLIA (116 aa). Asp8 and Asp95 together coordinate Mg(2+).

This sequence belongs to the PINc/VapC protein family. The cofactor is Mg(2+).

Its function is as follows. Toxic component of a type II toxin-antitoxin (TA) system. An RNase. Its cognate antitoxin is VapB51. This is Ribonuclease VapC51 from Mycobacterium tuberculosis (strain ATCC 25618 / H37Rv).